A 485-amino-acid chain; its full sequence is Glycogen synthase (485 aa).

Lys-18 is a binding site for ADP-alpha-D-glucose.

It belongs to the glycosyltransferase 1 family. Bacterial/plant glycogen synthase subfamily.

It carries out the reaction [(1-&gt;4)-alpha-D-glucosyl](n) + ADP-alpha-D-glucose = [(1-&gt;4)-alpha-D-glucosyl](n+1) + ADP + H(+). Its pathway is glycan biosynthesis; glycogen biosynthesis. Functionally, synthesizes alpha-1,4-glucan chains using ADP-glucose. The chain is Glycogen synthase from Dechloromonas aromatica (strain RCB).